We begin with the raw amino-acid sequence, 371 residues long: MLDISLIMLGAGNSSRFELPVKKQWLRIGSDPLWLAATKNLSEFYTFKDIIVVSKECEYMARFAPHYKFVTGGDTRQQSLKNALNLVSSQFVLVSDIARPCITHELFSKIIEGSKQANCVVPALKIADTAYFGDEVIDRDKIKLIQTPQLSKTNLLKQALETDTLYTDDSSAMRAVGASVWHVLGDERAHKITTKSDLAKIPCLIPPSNEHFTGIGFDAHEFERGRELWLCGEKIEYEFGLKAHSDGDVALHALTDAILGAAGLGDIGELFPDTDAEFKGISSLLLLQEAYKKVQSVGFELVNADITIMAERPKISKFKRKMEANIAGALNLAPNRINVKATTTEKLGFVGRGEGIAVIASANLKYYDWTK.

Residues 1–212 (MLDISLIMLG…CLIPPSNEHF (212 aa)) are 2-C-methyl-D-erythritol 4-phosphate cytidylyltransferase. A 2-C-methyl-D-erythritol 2,4-cyclodiphosphate synthase region spans residues 212-371 (FTGIGFDAHE…ANLKYYDWTK (160 aa)). A divalent metal cation is bound by residues Asp-218 and His-220. Residues 218–220 (DAH) and 244–245 (HS) each bind 4-CDP-2-C-methyl-D-erythritol 2-phosphate. His-252 serves as a coordination point for a divalent metal cation. Residues 266 to 268 (DIG), 271 to 275 (FPDTD), 342 to 345 (TTTE), Phe-349, and Arg-352 contribute to the 4-CDP-2-C-methyl-D-erythritol 2-phosphate site.

The protein in the N-terminal section; belongs to the IspD/TarI cytidylyltransferase family. IspD subfamily. It in the C-terminal section; belongs to the IspF family. Requires a divalent metal cation as cofactor.

It catalyses the reaction 2-C-methyl-D-erythritol 4-phosphate + CTP + H(+) = 4-CDP-2-C-methyl-D-erythritol + diphosphate. The catalysed reaction is 4-CDP-2-C-methyl-D-erythritol 2-phosphate = 2-C-methyl-D-erythritol 2,4-cyclic diphosphate + CMP. Its pathway is isoprenoid biosynthesis; isopentenyl diphosphate biosynthesis via DXP pathway; isopentenyl diphosphate from 1-deoxy-D-xylulose 5-phosphate: step 2/6. It participates in isoprenoid biosynthesis; isopentenyl diphosphate biosynthesis via DXP pathway; isopentenyl diphosphate from 1-deoxy-D-xylulose 5-phosphate: step 4/6. Functionally, bifunctional enzyme that catalyzes the formation of 4-diphosphocytidyl-2-C-methyl-D-erythritol from CTP and 2-C-methyl-D-erythritol 4-phosphate (MEP) (IspD), and catalyzes the conversion of 4-diphosphocytidyl-2-C-methyl-D-erythritol 2-phosphate (CDP-ME2P) to 2-C-methyl-D-erythritol 2,4-cyclodiphosphate (ME-CPP) with a corresponding release of cytidine 5-monophosphate (CMP) (IspF). In Campylobacter curvus (strain 525.92), this protein is Bifunctional enzyme IspD/IspF.